The following is a 328-amino-acid chain: DNA-directed RNA polymerase subunit alpha (328 aa).

The interval 1-234 is alpha N-terminal domain (alpha-NTD); the sequence is MQTAVNEFLT…QQLAVFVDLE (234 aa). The tract at residues 248 to 328 is alpha C-terminal domain (alpha-CTD); the sequence is IDPILLRPVD…NWPPASLKND (81 aa).

It belongs to the RNA polymerase alpha chain family. Homodimer. The RNAP catalytic core consists of 2 alpha, 1 beta, 1 beta' and 1 omega subunit. When a sigma factor is associated with the core the holoenzyme is formed, which can initiate transcription.

It carries out the reaction RNA(n) + a ribonucleoside 5'-triphosphate = RNA(n+1) + diphosphate. DNA-dependent RNA polymerase catalyzes the transcription of DNA into RNA using the four ribonucleoside triphosphates as substrates. This chain is DNA-directed RNA polymerase subunit alpha, found in Cellvibrio japonicus (strain Ueda107) (Pseudomonas fluorescens subsp. cellulosa).